Here is a 381-residue protein sequence, read N- to C-terminus: Regulatory protein RapF (381 aa).

Mn(2+) is bound by residues leucine 40, methionine 43, and glutamate 45. TPR repeat units lie at residues 101–137 (YYFN…VKDR), 148–181 (SESY…NIRL), 182–215 (LQCH…AEAE), 222–255 (GRTL…FEES), 262–295 (PQAY…SQKA), and 337–370 (EDFA…RQLI).

This sequence belongs to the Rap family. In terms of assembly, monomer. Is monomeric either alone or in complex with PhrF. Interacts specifically with the C-terminal DNA-binding domain of ComA. Interacts with PhrF.

The protein localises to the cytoplasm. Inhibited by PhrF, which prevents RapF-ComA interaction. Interaction with PhrF induces a conformational change in RapF, which is propagated to the ComA binding site and causes the dissociation of ComA from RapF. Functionally, involved in the regulation of genetic competence development. Inhibits the activity of ComA, a transcriptional factor that regulates the development of genetic competence. Acts by binding to ComA, leading to the inhibition of its DNA-binding activity. May also affect transcription independently of ComA. The sequence is that of Regulatory protein RapF (rapF) from Bacillus subtilis (strain 168).